Reading from the N-terminus, the 329-residue chain is Galactosylgalactosylxylosylprotein 3-beta-glucuronosyltransferase 2 (329 aa).

Residues 1–2 (MK) are Cytoplasmic-facing. The helical; Signal-anchor for type II membrane protein transmembrane segment at 3 to 23 (SALFSRFFILLPWILIVIIML) threads the bilayer. Residues 24–329 (DVDTRRPAPP…YRLDTVKIEV (306 aa)) lie on the Lumenal side of the membrane. The disordered stretch occupies residues 45 to 87 (VGRGGARLPPRRGGPDSGPGRGWEKRNESRPHARPRPEPPLPT). Residues 66–81 (GWEKRNESRPHARPRP) are compositionally biased toward basic and acidic residues. Asn71 is a glycosylation site (N-linked (GlcNAc...) asparagine). Residues 93-95 (PTY), Asp124, Arg161, Arg166, and 191-193 (DDD) each bind UDP-alpha-D-glucuronate. Asp193 contacts Mn(2+). The interval 240 to 249 (WRADRPFAID) is interaction with galactose moiety of substrate glycoprotein. The active-site Proton donor/acceptor is the Glu279. N-linked (GlcNAc...) asparagine glycosylation is present at Asn298. A UDP-alpha-D-glucuronate-binding site is contributed by 306–308 (HTR).

Belongs to the glycosyltransferase 43 family. In terms of assembly, homodimer. Mn(2+) serves as cofactor.

Its subcellular location is the golgi apparatus membrane. It catalyses the reaction 3-O-(beta-D-galactosyl-(1-&gt;3)-beta-D-galactosyl-(1-&gt;4)-beta-D-xylosyl)-L-seryl-[protein] + UDP-alpha-D-glucuronate = 3-O-(beta-D-GlcA-(1-&gt;3)-beta-D-Gal-(1-&gt;3)-beta-D-Gal-(1-&gt;4)-beta-D-Xyl)-L-seryl-[protein] + UDP + H(+). It participates in protein modification; protein glycosylation. Functionally, involved in the biosynthesis of L2/HNK-1 carbohydrate epitope on both glycolipids and glycoproteins. This Canis lupus familiaris (Dog) protein is Galactosylgalactosylxylosylprotein 3-beta-glucuronosyltransferase 2 (B3GAT2).